A 127-amino-acid polypeptide reads, in one-letter code: Large ribosomal subunit protein bL12 (127 aa).

This sequence belongs to the bacterial ribosomal protein bL12 family. As to quaternary structure, homodimer. Part of the ribosomal stalk of the 50S ribosomal subunit. Forms a multimeric L10(L12)X complex, where L10 forms an elongated spine to which 2 to 4 L12 dimers bind in a sequential fashion. Binds GTP-bound translation factors.

Its function is as follows. Forms part of the ribosomal stalk which helps the ribosome interact with GTP-bound translation factors. Is thus essential for accurate translation. In Streptococcus thermophilus (strain CNRZ 1066), this protein is Large ribosomal subunit protein bL12.